Here is a 98-residue protein sequence, read N- to C-terminus: Large ribosomal subunit protein uL23 (98 aa).

It belongs to the universal ribosomal protein uL23 family. As to quaternary structure, part of the 50S ribosomal subunit. Contacts protein L29, and trigger factor when it is bound to the ribosome.

Functionally, one of the early assembly proteins it binds 23S rRNA. One of the proteins that surrounds the polypeptide exit tunnel on the outside of the ribosome. Forms the main docking site for trigger factor binding to the ribosome. In Borrelia garinii subsp. bavariensis (strain ATCC BAA-2496 / DSM 23469 / PBi) (Borreliella bavariensis), this protein is Large ribosomal subunit protein uL23.